A 412-amino-acid chain; its full sequence is uncharacterized protein (412 aa).

Transmembrane regions (helical) follow at residues 17–37 (LLLALALTMGVFAAGSEELVI), 54–74 (VLALSISIYGVMIFIGAPLLV), 91–111 (MIFIIGTVICALAQNIFFFFL), 112–132 (GRALSGLAAGAFVPTAYAVVG), 146–166 (LIVSSWSLALIFGVPLGSFIG), 173–193 (WTFWIFALMGVLVVLLILLEM), 225–245 (VYITITFCNMIGFYGMYSFLG), 257–277 (TAAGLFIMIYGIGFSMSVITG), 299–319 (LLACLPYAPASMFLLIASLFI), 346–366 (VMVFYSLASNLAVTLGSALMG), and 375–395 (AAVGLICAAITVLGFVLSVFA).

This sequence belongs to the major facilitator superfamily.

Its subcellular location is the cell membrane. This is an uncharacterized protein from Bacillus subtilis (strain 168).